We begin with the raw amino-acid sequence, 366 residues long: Probable dual-specificity RNA methyltransferase RlmN (366 aa).

The active-site Proton acceptor is glutamate 107. The Radical SAM core domain occupies 113–342 (AEERMTACLS…MAQKFHVTVR (230 aa)). Cysteines 120 and 353 form a disulfide. [4Fe-4S] cluster contacts are provided by cysteine 127, cysteine 131, and cysteine 134. S-adenosyl-L-methionine contacts are provided by residues 177–178 (GE), serine 210, 233–235 (SLH), and asparagine 310. Cysteine 353 (S-methylcysteine intermediate) is an active-site residue.

Belongs to the radical SAM superfamily. RlmN family. It depends on [4Fe-4S] cluster as a cofactor.

It localises to the cytoplasm. The enzyme catalyses adenosine(2503) in 23S rRNA + 2 reduced [2Fe-2S]-[ferredoxin] + 2 S-adenosyl-L-methionine = 2-methyladenosine(2503) in 23S rRNA + 5'-deoxyadenosine + L-methionine + 2 oxidized [2Fe-2S]-[ferredoxin] + S-adenosyl-L-homocysteine. It catalyses the reaction adenosine(37) in tRNA + 2 reduced [2Fe-2S]-[ferredoxin] + 2 S-adenosyl-L-methionine = 2-methyladenosine(37) in tRNA + 5'-deoxyadenosine + L-methionine + 2 oxidized [2Fe-2S]-[ferredoxin] + S-adenosyl-L-homocysteine. Functionally, specifically methylates position 2 of adenine 2503 in 23S rRNA and position 2 of adenine 37 in tRNAs. This is Probable dual-specificity RNA methyltransferase RlmN from Chlorobium chlorochromatii (strain CaD3).